The chain runs to 201 residues: Small ribosomal subunit protein uS4c (201 aa).

The tract at residues 15 to 43 (LGALPGLTNKRPRAGSDLRNQSRSGKKSQ) is disordered. One can recognise an S4 RNA-binding domain in the interval 89–152 (MRLDNILFRL…NSRTLIQNSL (64 aa)).

The protein belongs to the universal ribosomal protein uS4 family. In terms of assembly, part of the 30S ribosomal subunit. Contacts protein S5. The interaction surface between S4 and S5 is involved in control of translational fidelity.

It is found in the plastid. The protein resides in the chloroplast. Functionally, one of the primary rRNA binding proteins, it binds directly to 16S rRNA where it nucleates assembly of the body of the 30S subunit. In terms of biological role, with S5 and S12 plays an important role in translational accuracy. This chain is Small ribosomal subunit protein uS4c (rps4), found in Panax ginseng (Korean ginseng).